Here is a 169-residue protein sequence, read N- to C-terminus: Probable calcium-binding protein CML20 (169 aa).

Residues 1–23 (MSSIYRTVSRKEKPRRHHGLTTQ) form a disordered region. 4 EF-hand domains span residues 23-58 (QKKQ…LGFE), 59-94 (MTEE…KIGE), 96-131 (DTKE…LGEN), and 132-167 (FTDA…TAYG). Ca(2+) contacts are provided by aspartate 36, aspartate 38, serine 40, threonine 42, glutamate 47, aspartate 72, aspartate 74, serine 76, glutamate 83, aspartate 109, aspartate 111, asparagine 113, lysine 115, aspartate 120, aspartate 145, aspartate 147, aspartate 149, glutamate 151, and glutamate 156.

In terms of assembly, interacts with TON1A and TON1B. Interacts with SAC3A and SAC3B. Interacts with UCH1 and UCH2.

Functionally, potential calcium sensor. This Arabidopsis thaliana (Mouse-ear cress) protein is Probable calcium-binding protein CML20.